A 943-amino-acid chain; its full sequence is Isoleucine--tRNA ligase (943 aa).

Residues 59–69 (PYANGRIHLGH) carry the 'HIGH' region motif. An L-isoleucyl-5'-AMP-binding site is contributed by glutamate 577. A 'KMSKS' region motif is present at residues 618-622 (KMSKS). An ATP-binding site is contributed by lysine 621. Residues cysteine 906, cysteine 909, cysteine 926, and cysteine 929 each contribute to the Zn(2+) site.

This sequence belongs to the class-I aminoacyl-tRNA synthetase family. IleS type 1 subfamily. Monomer. Zn(2+) is required as a cofactor.

The protein localises to the cytoplasm. It carries out the reaction tRNA(Ile) + L-isoleucine + ATP = L-isoleucyl-tRNA(Ile) + AMP + diphosphate. Catalyzes the attachment of isoleucine to tRNA(Ile). As IleRS can inadvertently accommodate and process structurally similar amino acids such as valine, to avoid such errors it has two additional distinct tRNA(Ile)-dependent editing activities. One activity is designated as 'pretransfer' editing and involves the hydrolysis of activated Val-AMP. The other activity is designated 'posttransfer' editing and involves deacylation of mischarged Val-tRNA(Ile). The sequence is that of Isoleucine--tRNA ligase from Stenotrophomonas maltophilia (strain K279a).